A 417-amino-acid chain; its full sequence is Phosphoglycerate kinase (417 aa).

Positions 23, 24, 25, 26, 39, 40, 63, 64, 66, 67, 122, 123, 170, and 171 each coordinate (2R)-3-phosphoglycerate. Ser-203 bears the Phosphoserine mark. Gly-214 contributes to the ADP binding site. Gly-214 is a CDP binding site. AMP-binding residues include Ala-215 and Lys-216. An ATP-binding site is contributed by Ala-215. Ala-215 serves as a coordination point for Mg(2+). Position 219 (Asp-219) interacts with CDP. Residue Asp-219 coordinates Mg(2+). Lys-220 provides a ligand contact to AMP. Residue Lys-220 participates in ATP binding. Gly-238 is a binding site for ADP. Gly-238 contributes to the CDP binding site. 2 residues coordinate AMP: Ala-239 and Gly-313. Positions 239 and 313 each coordinate ATP. Gly-338 and Phe-343 together coordinate CDP. Phe-343 contacts ADP. Residue Glu-344 coordinates AMP. ATP-binding residues include Glu-344, Asp-375, and Thr-376. Asp-375 serves as a coordination point for Mg(2+).

It belongs to the phosphoglycerate kinase family. As to quaternary structure, monomer. Mg(2+) serves as cofactor. In terms of processing, dephosphorylated by PTC1 and PTC2 at Ser-203; the protein is cytosolic when dephosphorylated.

It localises to the cytoplasm. The protein localises to the cytosol. It is found in the mitochondrion. It catalyses the reaction (2R)-3-phosphoglycerate + ATP = (2R)-3-phospho-glyceroyl phosphate + ADP. Its pathway is carbohydrate degradation; glycolysis; pyruvate from D-glyceraldehyde 3-phosphate: step 2/5. Its function is as follows. Catalyzes one of the two ATP producing reactions in the glycolytic pathway via the reversible conversion of 1,3-diphosphoglycerate to 3-phosphoglycerate. Both L- and D- forms of purine and pyrimidine nucleotides can be used as substrates, but the activity is much lower on pyrimidines. Negatively regulates the biosynthesis of acetyl-CoA from pyruvate in the mitochondrion and consequently also attenuates aflatoxin production. In Aspergillus flavus (strain ATCC 200026 / FGSC A1120 / IAM 13836 / NRRL 3357 / JCM 12722 / SRRC 167), this protein is Phosphoglycerate kinase.